Reading from the N-terminus, the 256-residue chain is Putative ankyrin repeat protein PAE1861 (256 aa).

8 ANK repeats span residues 1 to 30, 34 to 63, 67 to 92, 93 to 122, 124 to 151, 155 to 184, 188 to 214, and 218 to 245; these read MDCN…SPDV, YGRT…DPNA, EGKT…ASAV, GVEE…RPGA, HGES…DPNA, HGKT…DVNV, AGRT…DLNA, and MGRT…PVPD.

In Pyrobaculum aerophilum (strain ATCC 51768 / DSM 7523 / JCM 9630 / CIP 104966 / NBRC 100827 / IM2), this protein is Putative ankyrin repeat protein PAE1861.